Here is a 196-residue protein sequence, read N- to C-terminus: uncharacterized protein (196 aa).

Positions 1-183 (MREFHYGVHM…RFLFILSDLG (183 aa)) constitute a Macro domain.

This sequence belongs to the MacroD-type family.

This is an uncharacterized protein from Thermoplasma acidophilum (strain ATCC 25905 / DSM 1728 / JCM 9062 / NBRC 15155 / AMRC-C165).